Reading from the N-terminus, the 518-residue chain is MTSSKIEMPGEVKADPAALMASLHLLPSPTPNLEIKYTKIFINNEWQNSESGRVFPVYNPATGEQVCEVQEADKADIDKAVQAARLAFSLGSVWRRMDASERGRLLDKLADLVERDRAVLATMESLNGGKPFLQAFYVDLQGVIKTFRYYAGWADKIHGMTIPVDGDYFTFTRHEPIGVCGQIIPWNFPLLMFAWKIAPALCCGNTVVIKPAEQTPLSALYMGALIKEAGFPPGVINILPGYGPTAGAAIASHIGIDKIAFTGSTEVGKLIQEAAGRSNLKRVTLELGGKSPNIIFADADLDYAVEQAHQGVFFNQGQCCTAGSRIFVEESIYEEFVRRSVERAKRRVVGSPFDPTTEQGPQIDKKQYNKILELIQSGVAEGAKLECGGKGLGRKGFFIEPTVFSNVTDDMRIAKEEIFGPVQEILRFKTMDEVIERANNSDFGLVAAVFTNDINKALTVSSAMQAGTVWINCYNALNAQSPFGGFKMSGNGREMGEFGLREYSEVKTVTVKIPQKNS.

The residue at position 168 (Y168) is a Phosphotyrosine. Residues 184–186, 210–213, and 264–266 contribute to the NAD(+) site; these read IPW, KPAE, and STE. E286 acts as the Proton acceptor in catalysis. C320 serves as the catalytic Nucleophile. A Phosphoserine modification is found at S351. NAD(+) contacts are provided by residues 366 to 370 and E417; that span reads KQYNK.

The protein belongs to the aldehyde dehydrogenase family. As to quaternary structure, homotetramer.

The protein resides in the cytoplasm. The catalysed reaction is retinal + NAD(+) + H2O = retinoate + NADH + 2 H(+). It catalyses the reaction all-trans-retinal + NAD(+) + H2O = all-trans-retinoate + NADH + 2 H(+). The enzyme catalyses all-trans-13,14-dihydroretinal + NAD(+) + H2O = all-trans-13,14-dihydroretinoate + NADH + 2 H(+). It participates in cofactor metabolism; retinol metabolism. Its function is as follows. Catalyzes the NAD-dependent oxidation of aldehyde substrates, such as all-trans-retinal and all-trans-13,14-dihydroretinal, to their corresponding carboxylic acids, all-trans-retinoate and all-trans-13,14-dihydroretinoate, respectively. Retinoate signaling is critical for the transcriptional control of many genes, for instance it is crucial for initiation of meiosis in both male and female. Recognizes retinal as substrate, both in its free form and when bound to cellular retinol-binding protein. Can metabolize octanal and decanal, but has only very low activity with benzaldehyde, acetaldehyde and propanal. Displays complete lack of activity with citral. The chain is Retinal dehydrogenase 2 (ALDH1A2) from Homo sapiens (Human).